Reading from the N-terminus, the 285-residue chain is Probable endonuclease 4 (285 aa).

Zn(2+) contacts are provided by His69, His109, Glu145, Asp179, His182, His216, Asp229, His231, and Glu261.

Belongs to the AP endonuclease 2 family. The cofactor is Zn(2+).

It carries out the reaction Endonucleolytic cleavage to 5'-phosphooligonucleotide end-products.. Its function is as follows. Endonuclease IV plays a role in DNA repair. It cleaves phosphodiester bonds at apurinic or apyrimidinic (AP) sites, generating a 3'-hydroxyl group and a 5'-terminal sugar phosphate. This is Probable endonuclease 4 from Shigella flexneri serotype 5b (strain 8401).